A 149-amino-acid chain; its full sequence is 3-dehydroquinate dehydratase (149 aa).

The active-site Proton acceptor is tyrosine 26. Substrate contacts are provided by asparagine 77, histidine 83, and aspartate 90. Histidine 103 acts as the Proton donor in catalysis. Residues 104 to 105 and arginine 114 each bind substrate; that span reads LS.

The protein belongs to the type-II 3-dehydroquinase family. As to quaternary structure, homododecamer.

It carries out the reaction 3-dehydroquinate = 3-dehydroshikimate + H2O. Its pathway is metabolic intermediate biosynthesis; chorismate biosynthesis; chorismate from D-erythrose 4-phosphate and phosphoenolpyruvate: step 3/7. Catalyzes a trans-dehydration via an enolate intermediate. This chain is 3-dehydroquinate dehydratase, found in Aliivibrio fischeri (strain MJ11) (Vibrio fischeri).